A 549-amino-acid chain; its full sequence is mRNA-capping enzyme subunit beta (549 aa).

Ser-2 is modified (N-acetylserine). Ser-15 carries the post-translational modification Phosphoserine. A disordered region spans residues 30–169; the sequence is LQKLSEAANG…QGNEGNIASN (140 aa). The span at 86-96 shows a compositional bias: acidic residues; the sequence is DDEETDTDDEM. At Ser-124 the chain carries Phosphoserine. The segment covering 135-157 has biased composition (basic and acidic residues); the sequence is AKLEKPSDDSIHQNSKSDEEQRI. Residue Lys-223 is the N6-GMP-lysine intermediate of the active site.

Belongs to the fungal TPase family. In terms of assembly, heterodimer. The mRNA-capping enzyme is composed of two separate chains alpha and beta, respectively a mRNA guanylyltransferase and an mRNA 5'-triphosphate monophosphatase. Mg(2+) is required as a cofactor.

It is found in the nucleus. The enzyme catalyses a 5'-end triphospho-ribonucleoside in mRNA + H2O = a 5'-end diphospho-ribonucleoside in mRNA + phosphate + H(+). Functionally, first step of mRNA capping. Converts the 5'-triphosphate end of a nascent mRNA chain into a diphosphate end. In Saccharomyces cerevisiae (strain ATCC 204508 / S288c) (Baker's yeast), this protein is mRNA-capping enzyme subunit beta (CET1).